The chain runs to 306 residues: Mitochondrial brown fat uncoupling protein 1 (306 aa).

At 1-10 the chain is on the mitochondrial intermembrane side; sequence MVGTTATDVA. Residues 11 to 32 form a helical membrane-spanning segment; the sequence is PTMGVKIFSAGVAACLADVITF. Solcar repeat units lie at residues 11–102, 110–200, and 209–294; these read PTMG…VQEF, PSLR…MKGA, and DDVP…LKRE. Topologically, residues 33-73 are mitochondrial matrix; the sequence is PLDTAKVRLQIQGECQTTSGIRYKGVLGTITTLAKTEGPLK. Lysine 56 serves as a coordination point for fatty acid 16:0. Residues 74–96 traverse the membrane as a helical segment; sequence LYSGLPAGLQRQISFASLRIGLY. Residues 97 to 115 lie on the Mitochondrial intermembrane side of the membrane; the sequence is DTVQEFWGGEEATPSLRSK. Residues 116–132 traverse the membrane as a helical segment; it reads ICAGLTTGGVAVFIGQP. At 133-177 the chain is on the mitochondrial matrix side; it reads TEVVKVRLQAQSHLHGLKPRYTGTYNAYRIIATTESLSTLWKGTT. Residues 178-194 traverse the membrane as a helical segment; it reads PNLLRNIIINCTELVTY. Residues 195-211 are Mitochondrial intermembrane-facing; that stretch reads DLMKGALVRNDILADDV. Residues 212-231 form a helical membrane-spanning segment; the sequence is PCHLLSALIAGFCTTLLSSP. Residues 232–265 lie on the Mitochondrial matrix side of the membrane; that stretch reads VDVVKTRFINSPQGQYTSVPSCAMSMLTKEGPTA. Residue cysteine 253 is modified to Cysteine sulfenic acid (-SOH). A helical transmembrane segment spans residues 266-288; that stretch reads FFKGFAPSFLRLASWNVIMFVCF. Lysine 268 serves as a coordination point for fatty acid 16:0. At 289–306 the chain is on the mitochondrial intermembrane side; sequence EKLKRELMKSRQTVDCAT.

Belongs to the mitochondrial carrier (TC 2.A.29) family. In terms of assembly, most probably functions as a monomer. Binds one purine nucleotide per monomer. However, has also been suggested to function as a homodimer or a homotetramer. Tightly associates with cardiolipin in the mitochondrion inner membrane; may stabilize and regulate its activity. In terms of processing, may undergo sulfenylation upon cold exposure. May increase the sensitivity of UCP1 thermogenic function to the activation by noradrenaline probably through structural effects. May undergo ubiquitin-mediated proteasomal degradation.

It localises to the mitochondrion inner membrane. It carries out the reaction H(+)(in) = H(+)(out). With respect to regulation, has no constitutive proton transporter activity and has to be activated by long-chain fatty acids/LCFAs. Inhibited by purine nucleotides. Both purine nucleotides and LCFAs bind the cytosolic side of the transporter and directly compete to activate or inhibit it. Activated by noradrenaline and reactive oxygen species. Despite lacking canonical translational encoding for selenocysteine, a small pool of the protein has been observed to selectively incorporate selenocysteine at 'Cys-253'. Selenocysteine-modified protein is highly sensitive to redox modification and may constitute a pool of protein highly sensitive to activation by elevated levels of reactive oxygen species (ROS). In terms of biological role, mitochondrial protein responsible for thermogenic respiration, a specialized capacity of brown adipose tissue and beige fat that participates in non-shivering adaptive thermogenesis to temperature and diet variations and more generally to the regulation of energy balance. Functions as a long-chain fatty acid/LCFA and proton symporter, simultaneously transporting one LCFA and one proton through the inner mitochondrial membrane. However, LCFAs remaining associated with the transporter via their hydrophobic tails, it results in an apparent transport of protons activated by LCFAs. Thereby, dissipates the mitochondrial proton gradient and converts the energy of substrate oxydation into heat instead of ATP. Regulates the production of reactive oxygen species/ROS by mitochondria. This is Mitochondrial brown fat uncoupling protein 1 from Ochotona dauurica (Daurian pika).